We begin with the raw amino-acid sequence, 473 residues long: Arginine biosynthesis bifunctional protein ArgJ, mitochondrial (473 aa).

The substrate site is built by threonine 201, lysine 230, threonine 241, glutamate 328, asparagine 468, and threonine 473. Residue threonine 241 is the Nucleophile of the active site.

Belongs to the ArgJ family. As to quaternary structure, heterodimer of an alpha and a beta chain. Post-translationally, the alpha and beta chains are autoproteolytically processed from a single precursor protein within the mitochondrion.

Its subcellular location is the mitochondrion matrix. The catalysed reaction is N(2)-acetyl-L-ornithine + L-glutamate = N-acetyl-L-glutamate + L-ornithine. It catalyses the reaction L-glutamate + acetyl-CoA = N-acetyl-L-glutamate + CoA + H(+). It functions in the pathway amino-acid biosynthesis; L-arginine biosynthesis; L-ornithine and N-acetyl-L-glutamate from L-glutamate and N(2)-acetyl-L-ornithine (cyclic): step 1/1. Its pathway is amino-acid biosynthesis; L-arginine biosynthesis; N(2)-acetyl-L-ornithine from L-glutamate: step 1/4. In terms of biological role, catalyzes two activities which are involved in the cyclic version of arginine biosynthesis: the synthesis of acetylglutamate from glutamate and acetyl-CoA, and of ornithine by transacetylation between acetylornithine and glutamate. The polypeptide is Arginine biosynthesis bifunctional protein ArgJ, mitochondrial (Ajellomyces capsulatus (strain H143) (Darling's disease fungus)).